The chain runs to 312 residues: Olfactory receptor 6X1 (312 aa).

Over 1-23 the chain is Extracellular; the sequence is MRNGTVITEFILLGFPVIQGLQT. An N-linked (GlcNAc...) asparagine glycan is attached at asparagine 3. Residues 24-44 traverse the membrane as a helical segment; that stretch reads PLFIAIFLTYILTLAGNGLII. At 45–52 the chain is on the cytoplasmic side; that stretch reads ATVWAEPR. The chain crosses the membrane as a helical span at residues 53 to 73; that stretch reads LQIPMYFFLCNLSFLEIWYTT. Over 74 to 97 the chain is Extracellular; the sequence is TVIPKLLGTFVVARTVICMSCCLL. Residues cysteine 95 and cysteine 187 are joined by a disulfide bond. Residues 98 to 118 traverse the membrane as a helical segment; it reads QAFFHFFVGTTEFLILTIMSF. The Cytoplasmic portion of the chain corresponds to 119–137; sequence DRYLTICNPLHHPTIMTSK. The chain crosses the membrane as a helical span at residues 138 to 158; it reads LCLQLALSSWVVGFTIVFCQT. Topologically, residues 159 to 195 are extracellular; it reads MLLIQLPFCGNNVISHFYCDVGPSLKAACIDTSILEL. Residues 196 to 215 traverse the membrane as a helical segment; the sequence is LGVIATILVIPGSLLFNMIS. At 216–235 the chain is on the cytoplasmic side; that stretch reads YIYILSAILRIPSATGHQKT. The chain crosses the membrane as a helical span at residues 236 to 256; sequence FSTCASHLTVVSLLYGAVLFM. Over 257–269 the chain is Extracellular; the sequence is YLRPTAHSSFKIN. The chain crosses the membrane as a helical span at residues 270 to 290; that stretch reads KVVSVLNTILTPLLNPFIYTI. Residues 291-312 lie on the Cytoplasmic side of the membrane; the sequence is RNKEVKGALRKAMTCPKTGHAK.

Belongs to the G-protein coupled receptor 1 family.

The protein localises to the cell membrane. Odorant receptor. The protein is Olfactory receptor 6X1 (OR6X1) of Homo sapiens (Human).